We begin with the raw amino-acid sequence, 174 residues long: Ubiquitin-fold modifier-conjugating enzyme 1 (174 aa).

Catalysis depends on Cys119, which acts as the Glycyl thioester intermediate.

It belongs to the ubiquitin-conjugating enzyme family. UFC1 subfamily.

Its function is as follows. E2-like enzyme which forms an intermediate with UFM1 via a thioester linkage. The chain is Ubiquitin-fold modifier-conjugating enzyme 1 from Arabidopsis thaliana (Mouse-ear cress).